Here is a 206-residue protein sequence, read N- to C-terminus: Recombination protein RecR (206 aa).

The C4-type zinc-finger motif lies at 60-75; the sequence is CARCNTFCEGGLCDIC. Residues 83 to 178 enclose the Toprim domain; sequence RRLMVVHMPA…KVSRLSQGIP (96 aa).

The protein belongs to the RecR family.

May play a role in DNA repair. It seems to be involved in an RecBC-independent recombinational process of DNA repair. It may act with RecF and RecO. This is Recombination protein RecR from Neisseria gonorrhoeae (strain NCCP11945).